Reading from the N-terminus, the 849-residue chain is Ribosome biogenesis protein ERB1 (849 aa).

The segment at 1-130 is disordered; that stretch reads MARNSIKKSP…PKDDDLSRIN (130 aa). 2 stretches are compositionally biased toward acidic residues: residues 29 to 44 and 51 to 123; these read EAEE…DELN and ASDD…EPKD. Residues 286–405 are required for interaction with NOP7; that stretch reads RFVPSKHEAK…LRQVPGYQDS (120 aa). The tract at residues 405-441 is required for interaction with YTM1; that stretch reads SVRERFERSLDLYLAPRVRHNKLNIDPDSLIPDLPSP. 2 WD repeats span residues 457-496 and 505-545; these read GHTG…QVYK and NNED…FDIE. Basic and acidic residues predominate over residues 569–581; it reads KISSQKEEDNKES. The tract at residues 569–619 is disordered; the sequence is KISSQKEEDNKESDNEDEDEEEDNDDDDDDDEPETSSTVEPKKEVAKWYPP. The span at 582-602 shows a compositional bias: acidic residues; that stretch reads DNEDEDEEEDNDDDDDDDEPE. WD repeat units follow at residues 633–675, 678–716, 719–758, 762–802, and 818–849; these read QCRK…SQSP, KSKG…LLKK, PGVR…TPYK, YHEK…DLMT, and INQI…LWTT.

The protein belongs to the WD repeat BOP1/ERB1 family. Component of the NOP7 complex, composed of ERB1, NOP7 and YTM1. The complex is held together by ERB1, which interacts with NOP7 via its N-terminal domain and with YTM1 via a high-affinity interaction between the seven-bladed beta-propeller domains of the 2 proteins. The NOP7 complex associates with the 66S pre-ribosome.

Its subcellular location is the nucleus. It localises to the nucleolus. It is found in the nucleoplasm. In terms of biological role, component of the NOP7 complex, which is required for maturation of the 25S and 5.8S ribosomal RNAs and formation of the 60S ribosome. This is Ribosome biogenesis protein ERB1 from Candida albicans (strain SC5314 / ATCC MYA-2876) (Yeast).